The following is a 101-amino-acid chain: Small ribosomal subunit protein bS18c (101 aa).

The protein belongs to the bacterial ribosomal protein bS18 family. In terms of assembly, part of the 30S ribosomal subunit.

The protein localises to the plastid. It localises to the chloroplast. The polypeptide is Small ribosomal subunit protein bS18c (rps18) (Arabidopsis thaliana (Mouse-ear cress)).